The chain runs to 385 residues: Tyrosine--tRNA ligase 1, cytoplasmic (385 aa).

The 'HIGH' region signature appears at 77–85 (PSGRMHIAQ). Residues Tyr200, Gln204, Asp207, and Gln222 each coordinate L-tyrosine. Positions 259 to 263 (KMSKS) match the 'KMSKS' region motif. Lys262 lines the ATP pocket.

The protein belongs to the class-I aminoacyl-tRNA synthetase family.

The protein resides in the cytoplasm. The protein localises to the cytosol. The catalysed reaction is tRNA(Tyr) + L-tyrosine + ATP = L-tyrosyl-tRNA(Tyr) + AMP + diphosphate + H(+). Its function is as follows. Catalyzes the attachment of tyrosine to tRNA(Tyr) in a two-step reaction: tyrosine is first activated by ATP to form Tyr-AMP and then transferred to the acceptor end of tRNA(Tyr). This is Tyrosine--tRNA ligase 1, cytoplasmic from Arabidopsis thaliana (Mouse-ear cress).